The primary structure comprises 205 residues: Imidazoleglycerol-phosphate dehydratase (205 aa).

It belongs to the imidazoleglycerol-phosphate dehydratase family.

It catalyses the reaction D-erythro-1-(imidazol-4-yl)glycerol 3-phosphate = 3-(imidazol-4-yl)-2-oxopropyl phosphate + H2O. The protein operates within amino-acid biosynthesis; L-histidine biosynthesis; L-histidine from 5-phospho-alpha-D-ribose 1-diphosphate: step 6/9. This Phaffia rhodozyma (Yeast) protein is Imidazoleglycerol-phosphate dehydratase (HIS3).